The following is a 267-amino-acid chain: Tryptophan synthase alpha chain (267 aa).

Active-site proton acceptor residues include glutamate 49 and aspartate 60.

The protein belongs to the TrpA family. In terms of assembly, tetramer of two alpha and two beta chains.

It catalyses the reaction (1S,2R)-1-C-(indol-3-yl)glycerol 3-phosphate + L-serine = D-glyceraldehyde 3-phosphate + L-tryptophan + H2O. It functions in the pathway amino-acid biosynthesis; L-tryptophan biosynthesis; L-tryptophan from chorismate: step 5/5. In terms of biological role, the alpha subunit is responsible for the aldol cleavage of indoleglycerol phosphate to indole and glyceraldehyde 3-phosphate. This chain is Tryptophan synthase alpha chain, found in Carboxydothermus hydrogenoformans (strain ATCC BAA-161 / DSM 6008 / Z-2901).